We begin with the raw amino-acid sequence, 416 residues long: WD repeat-containing protein JIP5 (416 aa).

WD repeat units follow at residues 9 to 48 (PLSS…ENGK), 62 to 101 (RHKG…VEWK), and 112 to 151 (GFQV…TEVS). A disordered region spans residues 149-183 (EVSARPQQTHHPHDDYVSSLTPLPPSETSTSGYSK). Residues 166-179 (SSLTPLPPSETSTS) show a composition bias toward low complexity. 3 WD repeats span residues 214–255 (ISSS…DQDE), 264–308 (DGGE…ISEL), and 309–348 (SHDD…EEGN). Composition is skewed to acidic residues over residues 343 to 359 (SDEE…DIEN) and 374 to 383 (SDEEEDSDDD). The tract at residues 343 to 416 (SDEEGNDDES…VHVMAFKGLD (74 aa)) is disordered. The span at 389-400 (KGKRKKRKRGKG) shows a compositional bias: basic residues.

Belongs to the WD repeat WDR55 family.

The protein resides in the nucleus. It localises to the nucleolus. In Coccidioides immitis (strain RS) (Valley fever fungus), this protein is WD repeat-containing protein JIP5 (JIP5).